The chain runs to 585 residues: Arginine--tRNA ligase (585 aa).

Residues 131–141 carry the 'HIGH' region motif; sequence ANPTGPMHVGH.

Belongs to the class-I aminoacyl-tRNA synthetase family. In terms of assembly, monomer.

The protein localises to the cytoplasm. It catalyses the reaction tRNA(Arg) + L-arginine + ATP = L-arginyl-tRNA(Arg) + AMP + diphosphate. The sequence is that of Arginine--tRNA ligase from Chelativorans sp. (strain BNC1).